The primary structure comprises 417 residues: Gamma-glutamyl phosphate reductase (417 aa).

This sequence belongs to the gamma-glutamyl phosphate reductase family.

The protein localises to the cytoplasm. The catalysed reaction is L-glutamate 5-semialdehyde + phosphate + NADP(+) = L-glutamyl 5-phosphate + NADPH + H(+). It participates in amino-acid biosynthesis; L-proline biosynthesis; L-glutamate 5-semialdehyde from L-glutamate: step 2/2. Catalyzes the NADPH-dependent reduction of L-glutamate 5-phosphate into L-glutamate 5-semialdehyde and phosphate. The product spontaneously undergoes cyclization to form 1-pyrroline-5-carboxylate. The chain is Gamma-glutamyl phosphate reductase from Escherichia coli O6:H1 (strain CFT073 / ATCC 700928 / UPEC).